A 463-amino-acid chain; its full sequence is Chaperone SurA (463 aa).

The first 25 residues, 1–25, serve as a signal peptide directing secretion; sequence MTRYFSIVLSLLLAVSCVFLPVASA. 2 consecutive PpiC domains span residues 175-277 and 291-390; these read GAQY…KLVE and ATEY…QRLG. The interval 439–463 is disordered; sequence ADDHHTPSAAVTPATGAVLPAATKH.

The protein localises to the periplasm. The enzyme catalyses [protein]-peptidylproline (omega=180) = [protein]-peptidylproline (omega=0). In terms of biological role, chaperone involved in the correct folding and assembly of outer membrane proteins. Recognizes specific patterns of aromatic residues and the orientation of their side chains, which are found more frequently in integral outer membrane proteins. May act in both early periplasmic and late outer membrane-associated steps of protein maturation. The polypeptide is Chaperone SurA (Xylella fastidiosa (strain Temecula1 / ATCC 700964)).